Reading from the N-terminus, the 511-residue chain is ATP synthase subunit alpha (511 aa).

Residue 169-176 coordinates ATP; the sequence is GDRQTGKT.

It belongs to the ATPase alpha/beta chains family. As to quaternary structure, F-type ATPases have 2 components, CF(1) - the catalytic core - and CF(0) - the membrane proton channel. CF(1) has five subunits: alpha(3), beta(3), gamma(1), delta(1), epsilon(1). CF(0) has three main subunits: a(1), b(2) and c(9-12). The alpha and beta chains form an alternating ring which encloses part of the gamma chain. CF(1) is attached to CF(0) by a central stalk formed by the gamma and epsilon chains, while a peripheral stalk is formed by the delta and b chains.

It localises to the cell inner membrane. The enzyme catalyses ATP + H2O + 4 H(+)(in) = ADP + phosphate + 5 H(+)(out). Functionally, produces ATP from ADP in the presence of a proton gradient across the membrane. The alpha chain is a regulatory subunit. The sequence is that of ATP synthase subunit alpha from Bartonella henselae (strain ATCC 49882 / DSM 28221 / CCUG 30454 / Houston 1) (Rochalimaea henselae).